A 335-amino-acid chain; its full sequence is Polyprenol dehydrogenase (335 aa).

NAD(+) contacts are provided by I55, Y208, K212, and T245. The active-site Proton acceptor is the Y208.

Belongs to the short-chain dehydrogenases/reductases (SDR) family.

The protein resides in the lipid droplet. It localises to the secreted. The catalysed reaction is a di-trans,poly-cis-polyprenol + NAD(+) = a di-trans,poly-cis-polyprenal + NADH + H(+). It catalyses the reaction a di-trans,poly-cis-polyprenol + NADP(+) = a di-trans,poly-cis-polyprenal + NADPH + H(+). It carries out the reaction a di-trans,poly-cis-dolichol + NADP(+) = a di-trans,poly-cis-dolichal + NADPH + H(+). The enzyme catalyses a di-trans,poly-cis-dolichol + NAD(+) = a di-trans,poly-cis-dolichal + NADH + H(+). It functions in the pathway protein modification; protein glycosylation. Functionally, oxidoreductase that plays a key role in early steps of protein N-linked glycosylation by mediating two non-consecutive steps in dolichol biosynthesis. Acts both as a NAD(+)-dependent dehydrogenase and as a NADPH-dependent reductase during the conversion of polyprenol into dolichol. First catalyzes the NAD(+)-dependent dehydrogenation of polyprenol into polyprenal; polyprenal is then reduced into dolichal by SRD5A3. It then catalyzes the NADPH-dependent reduction of dolichal into dolichol. May also acts as a positive regulator of starvation-induced autophagy. This chain is Polyprenol dehydrogenase (Dhrsx), found in Mus musculus (Mouse).